We begin with the raw amino-acid sequence, 364 residues long: Glycerophosphodiester phosphodiesterase (364 aa).

The first 18 residues, 1–18 (MKLKTLALSLLAAGVLAG), serve as a signal peptide directing secretion. The N-palmitoyl cysteine moiety is linked to residue Cys19. The S-diacylglycerol cysteine moiety is linked to residue Cys19. In terms of domain architecture, GP-PDE spans 35-360 (KIIIAHRGAS…DFPDTGVEFL (326 aa)). Catalysis depends on His40, which acts as the Proton acceptor. Residues Glu67 and Asp69 each coordinate Ca(2+). His82 (proton donor) is an active-site residue. Glu175 lines the Ca(2+) pocket.

It belongs to the glycerophosphoryl diester phosphodiesterase family. Requires Ca(2+) as cofactor. Contains both ester- and amide-linked fatty acids.

It localises to the cell outer membrane. It carries out the reaction a sn-glycero-3-phosphodiester + H2O = an alcohol + sn-glycerol 3-phosphate + H(+). Glycerophosphodiester phosphodiesterase hydrolyzes glycerophosphodiesters into glycerol-3-phosphate (G3P) and the corresponding alcohol. Has a specific affinity for human immunoglobulin D myeloma protein. This Haemophilus influenzae (strain ATCC 51907 / DSM 11121 / KW20 / Rd) protein is Glycerophosphodiester phosphodiesterase (glpQ).